The sequence spans 318 residues: Coproporphyrin III ferrochelatase (318 aa).

Residues His186 and Glu268 each contribute to the Fe(2+) site.

Belongs to the ferrochelatase family.

The protein resides in the cytoplasm. It carries out the reaction Fe-coproporphyrin III + 2 H(+) = coproporphyrin III + Fe(2+). Its pathway is porphyrin-containing compound metabolism; protoheme biosynthesis. Its function is as follows. Involved in coproporphyrin-dependent heme b biosynthesis. Catalyzes the insertion of ferrous iron into coproporphyrin III to form Fe-coproporphyrin III. The chain is Coproporphyrin III ferrochelatase from Lactococcus lactis subsp. cremoris (strain MG1363).